We begin with the raw amino-acid sequence, 250 residues long: UPF0524 protein C3orf70 homolog (250 aa).

The interval 201–250 (ESCDEDTEEGAELSSEEDYSPESSWEPDECTLLSPSQSDLEVIETIETTV) is disordered. The segment covering 202–229 (SCDEDTEEGAELSSEEDYSPESSWEPDE) has biased composition (acidic residues).

The protein belongs to the UPF0524 family.

Its function is as follows. May play a role in neuronal and neurobehavioral development. The sequence is that of UPF0524 protein C3orf70 homolog from Bos taurus (Bovine).